The following is an 87-amino-acid chain: MALDYRKTFEIEIINEFQSAIHSKMLNYVLNNELDKSDSTNLQTNLLNQLSNMNQINLFKLSLEELEAYHEYLRSIKKYADSITRTT.

Belongs to the epsilon antitoxin family. As to quaternary structure, in the presence of the zeta toxin, forms an inactive PezA(2)PezT(2) heterotetramer.

In terms of biological role, antitoxin component of a type II toxin-antitoxin (TA) system. Neutralizes the toxic effect of cognate zeta toxin. Part of a postsegregational killing (PSK) system involved in the killing of plasmid-free cells. Continuous synthesis of the epsilon antitoxin is required to counteract the zeta toxin. The sequence is that of Antitoxin epsilon from Lactococcus lactis subsp. lactis (Streptococcus lactis).